The chain runs to 66 residues: Large ribosomal subunit protein bL35 (66 aa).

Belongs to the bacterial ribosomal protein bL35 family.

In Parvibaculum lavamentivorans (strain DS-1 / DSM 13023 / NCIMB 13966), this protein is Large ribosomal subunit protein bL35.